The chain runs to 449 residues: Keratin, type I cytoskeletal 27 (449 aa).

The tract at residues 1–73 (MSVRFSSASR…VNEHGLLSGN (73 aa)) is head. The tract at residues 74–109 (EKVTMQNLNDRLASYLENVQALEEANADLEQKIKDW) is coil 1A. The 316-residue stretch at 74-389 (EKVTMQNLND…LLIGGDEGSC (316 aa)) folds into the IF rod domain. The interval 110–131 (YEKFGPGSCRGLDHDYSRYFPI) is linker 1. The tract at residues 132–223 (IDDLRTQIIS…KNHEEEMQAL (92 aa)) is coil 1B. Positions 224–246 (QCAAGGNVNVEMNAAPGVDLTVL) are linker 12. The coil 2 stretch occupies residues 247-385 (LNNMRAEYEA…ETYCLLIGGD (139 aa)). Positions 386-449 (EGSCVKSKGQ…NNKNEQRIPS (64 aa)) are tail. Residues 425–449 (LSSRVHTLEEKSTKVNNKNEQRIPS) form a disordered region. Positions 430-449 (HTLEEKSTKVNNKNEQRIPS) are enriched in basic and acidic residues.

The protein belongs to the intermediate filament family. In terms of assembly, heterotetramer of two type I and two type II keratins. Interacts with KRT6A to form filaments.

The protein resides in the cytoplasm. Essential for the proper assembly of type I and type II keratin protein complexes and formation of keratin intermediate filaments in the inner root sheath (irs). This Rattus norvegicus (Rat) protein is Keratin, type I cytoskeletal 27.